The chain runs to 114 residues: T cell receptor beta variable 10-3 (114 aa).

The signal sequence occupies residues 1 to 21; sequence MGTRLFFYVALCLLWTGHMDA. Residues 22–114 enclose the Ig-like domain; it reads GITQSPRHKV…TSVYFCAISE (93 aa). A disulfide bridge connects residues Cys42 and Cys110.

In terms of assembly, alpha-beta TR is a heterodimer composed of an alpha and beta chain; disulfide-linked. The alpha-beta TR is associated with the transmembrane signaling CD3 coreceptor proteins to form the TR-CD3 (TcR or TCR). The assembly of alpha-beta TR heterodimers with CD3 occurs in the endoplasmic reticulum where a single alpha-beta TR heterodimer associates with one CD3D-CD3E heterodimer, one CD3G-CD3E heterodimer and one CD247 homodimer forming a stable octameric structure. CD3D-CD3E and CD3G-CD3E heterodimers preferentially associate with TR alpha and TR beta chains, respectively. The association of the CD247 homodimer is the last step of TcR assembly in the endoplasmic reticulum and is required for transport to the cell surface.

It is found in the cell membrane. V region of the variable domain of T cell receptor (TR) beta chain that participates in the antigen recognition. Alpha-beta T cell receptors are antigen specific receptors which are essential to the immune response and are present on the cell surface of T lymphocytes. Recognize peptide-major histocompatibility (MH) (pMH) complexes that are displayed by antigen presenting cells (APC), a prerequisite for efficient T cell adaptive immunity against pathogens. Binding of alpha-beta TR to pMH complex initiates TR-CD3 clustering on the cell surface and intracellular activation of LCK that phosphorylates the ITAM motifs of CD3G, CD3D, CD3E and CD247 enabling the recruitment of ZAP70. In turn ZAP70 phosphorylates LAT, which recruits numerous signaling molecules to form the LAT signalosome. The LAT signalosome propagates signal branching to three major signaling pathways, the calcium, the mitogen-activated protein kinase (MAPK) kinase and the nuclear factor NF-kappa-B (NF-kB) pathways, leading to the mobilization of transcription factors that are critical for gene expression and essential for T cell growth and differentiation. The T cell repertoire is generated in the thymus, by V-(D)-J rearrangement. This repertoire is then shaped by intrathymic selection events to generate a peripheral T cell pool of self-MH restricted, non-autoaggressive T cells. Post-thymic interaction of alpha-beta TR with the pMH complexes shapes TR structural and functional avidity. This chain is T cell receptor beta variable 10-3, found in Homo sapiens (Human).